A 477-amino-acid polypeptide reads, in one-letter code: Alkaline phosphatase (477 aa).

D44 provides a ligand contact to Mg(2+). D44 contributes to the Zn(2+) binding site. Residue S94 is the Phosphoserine intermediate of the active site. N-linked (GlcNAc...) asparagine glycosylation is present at N124. Mg(2+) is bound by residues H155 and T157. Cysteines 165 and 185 form a disulfide. An N-linked (GlcNAc...) asparagine glycan is attached at N214. E315 serves as a coordination point for Mg(2+). Zn(2+) contacts are provided by D320, H324, D361, and H362. N413 is a glycosylation site (N-linked (GlcNAc...) asparagine). H437 is a binding site for Zn(2+).

As to quaternary structure, homodimer. Requires Mg(2+) as cofactor. The cofactor is Zn(2+).

The protein resides in the cell membrane. The catalysed reaction is a phosphate monoester + H2O = an alcohol + phosphate. The protein is Alkaline phosphatase of Gadus morhua (Atlantic cod).